We begin with the raw amino-acid sequence, 384 residues long: Na(+)/H(+) antiporter NhaA (384 aa).

11 helical membrane-spanning segments follow: residues 9 to 29 (NLET…IIIA), 58 to 78 (LLLW…GLEI), 94 to 114 (LVPA…FIFF), 124 to 144 (GWAI…SLLG), 153 to 173 (ILLT…IALF), 179 to 199 (SLLS…LNYF), 204 to 224 (ISVF…SGVH), 256 to 276 (VVFL…FVGL), 285 to 305 (VVLG…FLSL), 325 to 345 (VYGI…IGSL), and 357 to 377 (MVKI…FLVL).

This sequence belongs to the NhaA Na(+)/H(+) (TC 2.A.33) antiporter family.

Its subcellular location is the cell inner membrane. It catalyses the reaction Na(+)(in) + 2 H(+)(out) = Na(+)(out) + 2 H(+)(in). Na(+)/H(+) antiporter that extrudes sodium in exchange for external protons. The sequence is that of Na(+)/H(+) antiporter NhaA from Legionella pneumophila (strain Lens).